The sequence spans 325 residues: GMP reductase (325 aa).

The active-site Thioimidate intermediate is the C174. Residue 203–226 (LIADGGIRTHGDIAKSIRFGATMV) participates in NADP(+) binding.

Belongs to the IMPDH/GMPR family. GuaC type 2 subfamily.

The catalysed reaction is IMP + NH4(+) + NADP(+) = GMP + NADPH + 2 H(+). In terms of biological role, catalyzes the irreversible NADPH-dependent deamination of GMP to IMP. It functions in the conversion of nucleobase, nucleoside and nucleotide derivatives of G to A nucleotides, and in maintaining the intracellular balance of A and G nucleotides. The sequence is that of GMP reductase from Pediococcus pentosaceus (strain ATCC 25745 / CCUG 21536 / LMG 10740 / 183-1w).